We begin with the raw amino-acid sequence, 226 residues long: Ribose-5-phosphate isomerase A (226 aa).

Residues 28 to 31, 80 to 83, and 93 to 96 contribute to the substrate site; these read TGST, DGAD, and KGGG. E102 acts as the Proton acceptor in catalysis. Substrate is bound at residue K120.

The protein belongs to the ribose 5-phosphate isomerase family. In terms of assembly, homodimer.

It catalyses the reaction aldehydo-D-ribose 5-phosphate = D-ribulose 5-phosphate. Its pathway is carbohydrate degradation; pentose phosphate pathway; D-ribose 5-phosphate from D-ribulose 5-phosphate (non-oxidative stage): step 1/1. Catalyzes the reversible conversion of ribose-5-phosphate to ribulose 5-phosphate. The chain is Ribose-5-phosphate isomerase A from Caulobacter sp. (strain K31).